Here is a 369-residue protein sequence, read N- to C-terminus: Zeaxanthin 7,8(7',8')-cleavage dioxygenase, chromoplastic (369 aa).

Residues H62, H112, H177, and H356 each contribute to the Fe cation site.

Belongs to the carotenoid oxygenase family. The cofactor is Fe(2+). As to expression, in the style branches.

Its subcellular location is the plastid. The protein localises to the chromoplast. It catalyses the reaction all-trans-zeaxanthin + 2 O2 = crocetin dialdehyde + 2 3beta-hydroxy-beta-cyclocitral. Its function is as follows. Cleaves zeaxanthin symmetrically at the 7-8 and 7'-8' double bonds to produce crocetin dialdehyde and hydroxy-beta-cyclocitral, two water-soluble precursors sequestred in vacuoles and involved in the synthesis of saffron pigment and aroma. This chain is Zeaxanthin 7,8(7',8')-cleavage dioxygenase, chromoplastic (ZCD), found in Crocus sativus (Saffron).